The sequence spans 663 residues: Heparan-alpha-glucosaminide N-acetyltransferase (663 aa).

The segment at 1-24 is disordered; it reads MTGARASAAEQRRAGRSGQARAAE. The Lumenal, vesicle portion of the chain corresponds to 1–190; that stretch reads MTGARASAAE…LAVNEDPVDS (190 aa). Asn94, Asn142, and Asn162 each carry an N-linked (GlcNAc...) asparagine glycan. A disulfide bridge connects residues Cys151 and Cys462. The helical transmembrane segment at 191–211 threads the bilayer; that stretch reads NLPVSIAFLIGLAVIIVISFL. Residues 212-275 are Cytoplasmic-facing; the sequence is RLLLSLDDFN…PRLRSVDTFR (64 aa). Phosphoserine occurs at positions 243 and 245. A helical transmembrane segment spans residues 276-296; it reads GIALILMVFVNYGGGKYWYFK. Residue His297 is part of the active site. The Lumenal, vesicle portion of the chain corresponds to 297–302; that stretch reads HASWNG. A helical transmembrane segment spans residues 303-323; the sequence is LTVADLVFPWFVFIMGSSIFL. At 324–345 the chain is on the cytoplasmic side; it reads SMTSILQRGCSKFRLLGKIAWR. A helical transmembrane segment spans residues 346–366; that stretch reads SFLLICIGIIIVNPNYCLGPL. The Lumenal, vesicle segment spans residues 367–374; it reads SWDKVRIP. A helical membrane pass occupies residues 375–395; it reads GVLQRLGVTYFVVAVLELLFA. Topologically, residues 396-420 are cytoplasmic; sequence KPVPEHCASERSCLSLRDITSSWPQ. The chain crosses the membrane as a helical span at residues 421–441; it reads WLLILVLEGLWLGLTFLLPVP. Topologically, residues 442–500 are lumenal, vesicle; that stretch reads GCPTGYLGPGGIGDFGKYPNCTGGAAGYIDRLLLGDDHLYQHPSSAVLYHTEVAYDPEG. A helical transmembrane segment spans residues 501–521; sequence ILGTINSIVMAFLGVQAGKIL. The Cytoplasmic portion of the chain corresponds to 522–529; it reads LYYKARTK. Residues 530–550 form a helical membrane-spanning segment; that stretch reads DILIRFTAWCCILGLISVALT. At 551–564 the chain is on the lumenal, vesicle side; it reads KVSENEGFIPVNKN. The helical transmembrane segment at 565–585 threads the bilayer; it reads LWSLSYVTTLSSFAFFILLVL. Over 586-592 the chain is Cytoplasmic; sequence YPVVDVK. A helical transmembrane segment spans residues 593–613; it reads GLWTGTPFFYPGMNSILVYVG. Residues 614-634 are Lumenal, vesicle-facing; sequence HEVFENYFPFQWKLKDNQSHK. Residues 624–635 are lysosomal targeting region; sequence QWKLKDNQSHKE. The helical transmembrane segment at 635–655 threads the bilayer; sequence EHLTQNIVATALWVLIAYILY. Topologically, residues 656-663 are cytoplasmic; that stretch reads RKKIFWKI.

As to quaternary structure, homooligomer. Homooligomerization is necessary for enzyme activity. In terms of processing, undergoes intralysosomal proteolytic cleavage; occurs within the end of the first and/or the beginning of the second luminal domain and is essential for the activation of the enzyme. Glycosylated. In terms of tissue distribution, widely expressed, with highest level in leukocytes, heart, liver, skeletal muscle, lung, placenta and liver.

It localises to the lysosome membrane. It carries out the reaction alpha-D-glucosaminyl-[heparan sulfate](n) + acetyl-CoA = N-acetyl-alpha-D-glucosaminyl-[heparan sulfate](n) + CoA + H(+). Its function is as follows. Lysosomal acetyltransferase that acetylates the non-reducing terminal alpha-glucosamine residue of intralysosomal heparin or heparan sulfate, converting it into a substrate for luminal alpha-N-acetyl glucosaminidase. The polypeptide is Heparan-alpha-glucosaminide N-acetyltransferase (HGSNAT) (Homo sapiens (Human)).